The chain runs to 128 residues: KRAB domain-containing protein 1 (128 aa).

Residues 15 to 86 (VAFEDVAVYF…QPQGVLSRND (72 aa)) form the KRAB domain.

This is KRAB domain-containing protein 1 (KRBOX1) from Homo sapiens (Human).